The sequence spans 239 residues: MADS-box transcription factor 34 (239 aa).

The MADS-box domain maps to 1 to 61 (MGRGKVVLQR…GRLYQFSSSS (61 aa)). The K-box domain occupies 88-178 (MQNNYQEYVN…KRKLDEIDVE (91 aa)). The interval 179–208 (AAPPQPPWNGNCSNGHGGGGGVFSSEPPQP) is disordered.

Highly expressed in leaves and at low levels in roots and spikelets (rice flower).

The protein localises to the nucleus. Functionally, probable transcription factor. This Oryza sativa subsp. japonica (Rice) protein is MADS-box transcription factor 34 (MADS34).